Reading from the N-terminus, the 550-residue chain is MPLQGSVSFKDVTVDFTQEEWQQLDPAQKALYRDVMLENYCHFVSVGFHMAKPDMIRKLEQGEELWTQRIFPSYSYLEEDGKTEDVLVKFKEYQDRHSRPLIFINHKKLIKERSNIYGKTFTLGKNRISKTILCEYKPDGKVLKNISELVIRNISPIKEKFGDSTGWEKSLLNTKHEKIHPAVNLHKQTERVLSGKQELIQHQKVQAPEQPFDHNECEKSFLMKGMLFTHTRAHRGERTFEYNKDGIAFIEKSSLSVHPSNLMEKKPSAYNKYGKFLCRKPVFIMPQRPQTEEKPFHCPYCGNNFRRKSYLIEHQRIHTGEKPYVCNQCGKAFRQKTALTLHEKTHIEGKPFICIDCGKSFRQKATLTRHHKTHTGEKAYECPQCGSAFRKKSYLIDHQRTHTGEKPYQCNECGKAFIQKTTLTVHQRTHTGEKPYICNECGKSFCQKTTLTLHQRIHTGEKPYICNECGKSFRQKAILTVHHRIHTGEKSNGCPQCGKAFSRKSNLIRHQKTHTGEKPYECKQCGKFFSCKSNLIVHQKTHKVETTGIQ.

Residues 1–105 (MPLQGSVSFK…RHSRPLIFIN (105 aa)) form a mediates interaction with TRIM28 region. 2 represses transcription regions span residues 5–46 (GSVS…FVSV) and 70–211 (IFPS…PEQP). Residues 7 to 78 (VSFKDVTVDF…RIFPSYSYLE (72 aa)) form the KRAB domain. The C2H2-type 1; degenerate zinc-finger motif lies at 212 to 234 (FDHNECEKSFLMKGMLFTHTRAH). C2H2-type zinc fingers lie at residues 296-318 (FHCPYCGNNFRRKSYLIEHQRIH), 324-346 (YVCNQCGKAFRQKTALTLHEKTH), 352-374 (FICIDCGKSFRQKATLTRHHKTH), 380-402 (YECPQCGSAFRKKSYLIDHQRTH), 408-430 (YQCNECGKAFIQKTTLTVHQRTH), 436-458 (YICNECGKSFCQKTTLTLHQRIH), 464-486 (YICNECGKSFRQKAILTVHHRIH), 492-514 (NGCPQCGKAFSRKSNLIRHQKTH), and 520-542 (YECKQCGKFFSCKSNLIVHQKTH). A required for transcriptional repression activity; probably mediates sequence-specific DNA-binding region spans residues 296 to 550 (FHCPYCGNNF…THKVETTGIQ (255 aa)).

Belongs to the krueppel C2H2-type zinc-finger protein family. As to quaternary structure, interacts with TRIM28; enhances the transcriptional repressor activity. In terms of tissue distribution, specifically expressed in heart with a weaker expression also detected in skeletal muscle.

It localises to the nucleus. Functionally, functions as a sequence-specific transcriptional repressor. This is Zinc finger protein 382 (ZNF382) from Homo sapiens (Human).